A 56-amino-acid polypeptide reads, in one-letter code: Ovomucoid (56 aa).

The region spanning 6-56 (VDCSDHPKPACLQEQKPICGSDNKTYDNKCSFCNAVVDSNGTLTLSHFGKC) is the Kazal-like domain. 3 cysteine pairs are disulfide-bonded: Cys8–Cys38, Cys16–Cys35, and Cys24–Cys56. N-linked (GlcNAc...) asparagine glycosylation is present at Asn45.

The protein resides in the secreted. In Ortalis vetula (Plain chachalaca), this protein is Ovomucoid.